The primary structure comprises 213 residues: MEVSVLIPAAGNGLRLGRGPKAFLQVGGRTLLEWTLAAFRDAAEVLVALPPGAEPPKGLGAVFLEGGATRQASVARLLEAASLPLVLVHDVARPFVSRGLVARVLEAAQRSGAAVPVLPVPDTLMAPEGEAYGRVVPREAFRLVQTPQGFFTALLREAHAYARRKGLEASDDAQLVQALGYPVALVEGEATAFKITHPQDLVLAEALARVWSA.

It belongs to the IspD/TarI cytidylyltransferase family. IspD subfamily.

The catalysed reaction is 2-C-methyl-D-erythritol 4-phosphate + CTP + H(+) = 4-CDP-2-C-methyl-D-erythritol + diphosphate. The protein operates within isoprenoid biosynthesis; isopentenyl diphosphate biosynthesis via DXP pathway; isopentenyl diphosphate from 1-deoxy-D-xylulose 5-phosphate: step 2/6. Its function is as follows. Catalyzes the formation of 4-diphosphocytidyl-2-C-methyl-D-erythritol from CTP and 2-C-methyl-D-erythritol 4-phosphate (MEP). This is 2-C-methyl-D-erythritol 4-phosphate cytidylyltransferase from Thermus thermophilus (strain ATCC BAA-163 / DSM 7039 / HB27).